The sequence spans 546 residues: Type II methyltransferase M.XhoI (546 aa).

It belongs to the N(4)/N(6)-methyltransferase family.

The catalysed reaction is a 2'-deoxyadenosine in DNA + S-adenosyl-L-methionine = an N(6)-methyl-2'-deoxyadenosine in DNA + S-adenosyl-L-homocysteine + H(+). Its function is as follows. A gamma subtype methylase, recognizes the double-stranded sequence 5'-CTCGAG-3', methylates A-5 on both strands, and protects the DNA from cleavage by the XhoI endonuclease. The polypeptide is Type II methyltransferase M.XhoI (Xanthomonas vasicola).